The primary structure comprises 510 residues: Probable gamma-aminobutyrate transaminase 3, mitochondrial (510 aa).

Residues 1 to 41 (MICRSLLLLRSNAASKASNIVKHVAATGCLPKYSSEAPARY) constitute a mitochondrion transit peptide. Pyridoxal 5'-phosphate is bound at residue 166 to 167 (GS). Tyr199 is a substrate binding site. Pyridoxal 5'-phosphate is bound at residue Asp306. Position 335 (Lys335) interacts with substrate. The residue at position 335 (Lys335) is an N6-(pyridoxal phosphate)lysine.

Belongs to the class-III pyridoxal-phosphate-dependent aminotransferase family.

Its subcellular location is the mitochondrion. It catalyses the reaction 4-aminobutanoate + pyruvate = succinate semialdehyde + L-alanine. It carries out the reaction 4-aminobutanoate + glyoxylate = succinate semialdehyde + glycine. Transaminase that degrades gamma-amino butyric acid (GABA). The chain is Probable gamma-aminobutyrate transaminase 3, mitochondrial from Oryza sativa subsp. japonica (Rice).